A 333-amino-acid polypeptide reads, in one-letter code: Adenosine deaminase (333 aa).

Zn(2+) contacts are provided by histidine 12 and histidine 14. Residues histidine 14, aspartate 16, and glycine 170 each coordinate substrate. Histidine 197 lines the Zn(2+) pocket. The active-site Proton donor is glutamate 200. Residue aspartate 278 coordinates Zn(2+). A substrate-binding site is contributed by aspartate 279.

It belongs to the metallo-dependent hydrolases superfamily. Adenosine and AMP deaminases family. Adenosine deaminase subfamily. Zn(2+) serves as cofactor.

It carries out the reaction adenosine + H2O + H(+) = inosine + NH4(+). The catalysed reaction is 2'-deoxyadenosine + H2O + H(+) = 2'-deoxyinosine + NH4(+). In terms of biological role, catalyzes the hydrolytic deamination of adenosine and 2-deoxyadenosine. In Salmonella enteritidis PT4 (strain P125109), this protein is Adenosine deaminase.